The following is a 293-amino-acid chain: uncharacterized protein (293 aa).

Disordered regions lie at residues 1–114 and 268–293; these read MFLR…IPKL and EETA…GRML. Phosphoserine occurs at positions 34, 35, and 89. 2 stretches are compositionally biased toward basic and acidic residues: residues 73–95 and 277–293; these read SSRD…RDKT and GQER…GRML.

This is an uncharacterized protein from Mus musculus (Mouse).